We begin with the raw amino-acid sequence, 327 residues long: Phenylalanine--tRNA ligase alpha subunit (327 aa).

Glu-252 lines the Mg(2+) pocket.

It belongs to the class-II aminoacyl-tRNA synthetase family. Phe-tRNA synthetase alpha subunit type 1 subfamily. Tetramer of two alpha and two beta subunits. Requires Mg(2+) as cofactor.

The protein resides in the cytoplasm. The catalysed reaction is tRNA(Phe) + L-phenylalanine + ATP = L-phenylalanyl-tRNA(Phe) + AMP + diphosphate + H(+). The protein is Phenylalanine--tRNA ligase alpha subunit of Shewanella woodyi (strain ATCC 51908 / MS32).